A 1103-amino-acid chain; its full sequence is Ataxin-2 homolog (1103 aa).

Over residues 1–10 (MSQSKDKKKF) the composition is skewed to basic residues. The disordered stretch occupies residues 1 to 75 (MSQSKDKKKF…QQQQQQQQPF (75 aa)). Gly residues predominate over residues 11 to 28 (VGGGGGGGGNNSGGGGYG). Composition is skewed to low complexity over residues 33-44 (NNNNNNRNSSNN) and 56-73 (HHQQQQQQQQQQQQQQQQ). The 83-residue stretch at 84-166 (RTVFMSMSLV…FLQITATGVV (83 aa)) folds into the Sm domain. Residues 258-287 (EFYKINQSVAEKKAQEIENEKSGNIHLLEE) are a coiled coil. Disordered regions lie at residues 305–474 (VVRK…RESP), 516–557 (TNKS…APKS), 615–763 (LVIK…NNTT), 901–920 (HTMKPPGSLQPGGGGVVQPQ), and 930–1103 (QPQG…NQYH). The span at 312–356 (PTSTTSTTTSPPTQNPTPSSSVYIPPSKRNNNNNTPSTPSVTSPP) shows a compositional bias: low complexity. Positions 358–371 (VDKKHQQTHQDKKQ) are enriched in basic and acidic residues. The stretch at 366–403 (HQDKKQTQQQQQQQQQQQQQQQQQQQQQQQQQQQQQTQ) forms a coiled coil. Residues 372–463 (TQQQQQQQQQ…NNTPTATNTN (92 aa)) are compositionally biased toward low complexity. Residues 516 to 529 (TNKSMNKSGSNIST) are compositionally biased toward polar residues. Low complexity-rich tracts occupy residues 530–544 (TPVNGSGNVGPNGTP), 637–676 (PTQLSLSGSSTSTNTSTTSPPTTNTTTTTTTATNSTTPST), and 683–694 (TTTPITTTILTE). Positions 691–730 (ILTENKSDDKEKEKEKEKEKVDEKEKEKEKEKSDEKDKDQ) form a coiled coil. Residues 695–741 (NKSDDKEKEKEKEKEKVDEKEKEKEKEKSDEKDKDQSSTLVEKKDES) show a composition bias toward basic and acidic residues. Low complexity predominate over residues 742–763 (SSSSNTTTTTTNTTNNNNNNTT). Over residues 930–957 (QPQGGVVQPSAGGAPKTMYQQQQQQQQQ) the composition is skewed to low complexity. The span at 960–969 (QPGGPMGVQR) shows a compositional bias: gly residues. Residues 974-984 (PPQQQPQQQQQ) show a composition bias toward low complexity. Residues 1020-1031 (YAVPHPQYPMPP) are compositionally biased toward pro residues. The segment covering 1062 to 1076 (QVVSQNSPQQDSPSN) has biased composition (low complexity).

Belongs to the ataxin-2 family.

In Dictyostelium discoideum (Social amoeba), this protein is Ataxin-2 homolog (atxn2).